We begin with the raw amino-acid sequence, 401 residues long: MENLSSRLDLLQEQLMNLYEQDSKLIEDQIKQWNLIRQEQVLFHFARKNGVMRIGLQAVPSLASSQEKAKTAIEMVLHLESLKDSPYGTEDWSLQDTSRELFLAPPAGTFKKSGSTLEVTYDNNPDNQTRHTIWNHVYYQNGDDVWRKVSSGVDAVGVYYLEHDGYKNYYVLFAEEASKYSTTGQYAVNYRGKRFTNVMSSTSSPRAAGAPAVHSDYPTLSESDTAQQSTSIDYTELPGQGETSQVRQRQQKTPVRRRPYGRRRSRSPRGGGRREGESTPSRTPGSVPSARDVGSIHTTPQKGHSSRLRRLLQEAWDPPVVCVKGGANQLKCLRYRLKASTQVDFDSISTTWHWTDRKNTERIGSARMLVKFIDEAQREKFLERVALPRSVSVFLGQFNGS.

The transactivation domain stretch occupies residues 1–202; that stretch reads MENLSSRLDL…KRFTNVMSST (202 aa). Positions 199–308 are disordered; it reads MSSTSSPRAA…TPQKGHSSRL (110 aa). Polar residues-rich tracts occupy residues 218–233 and 241–253; these read PTLS…TSID and GETS…QQKT. Residues 254–267 are compositionally biased toward basic residues; it reads PVRRRPYGRRRSRS. The interval 317–401 is DNA-binding domain; it reads DPPVVCVKGG…SVFLGQFNGS (85 aa). Lys-324 is covalently cross-linked (Glycyl lysine isopeptide (Lys-Gly) (interchain with G-Cter in SUMO)).

Belongs to the papillomaviridae E2 protein family. As to quaternary structure, binds DNA as homodimer. Interacts with protein E1; this interaction greatly increases E1 DNA-binding activity. Interacts with protein L1; this interaction enhances E2-dependent replication and transcription activation. Interacts with protein L2; this interaction inhibits E2 transcriptional activity but not DNA replication function E2. Interacts with protein E7; this interaction inhibits E7 oncogenic activity. Interacts with host TAF1; this interaction modulates E2-dependent transcriptional regulation. Interacts with host BRD4; this interaction mediates E2 transcriptional activation function. Additionally, the interaction with host BRD4 on mitotic chromosomes mediates tethering of the viral genome. Interacts with host TOPBP1; this interaction is required for optimal viral DNA replication. Post-translationally, phosphorylated. Sumoylation plays a regulatory role in E2 transcriptional activity.

The protein resides in the host nucleus. Functionally, plays a role in the initiation of viral DNA replication. A dimer of E2 interacts with a dimer of E1 in order to improve specificity of E1 DNA binding activity. Once the complex recognizes and binds DNA at specific sites, the E2 dimer is removed from DNA. E2 also regulates viral transcription through binding to the E2RE response element (5'-ACCNNNNNNGGT-3') present in multiple copies in the regulatory regions of the viral genome. Activates or represses transcription depending on E2RE's position with regards to proximal promoter elements including the TATA-box. Repression occurs by sterically hindering the assembly of the transcription initiation complex. The chain is Regulatory protein E2 from Homo sapiens (Human).